Here is a 159-residue protein sequence, read N- to C-terminus: D-aminoacyl-tRNA deacylase (159 aa).

Positions 146 to 147 (GP) match the Gly-cisPro motif, important for rejection of L-amino acids motif.

It belongs to the DTD family. As to quaternary structure, homodimer.

It is found in the cytoplasm. It carries out the reaction glycyl-tRNA(Ala) + H2O = tRNA(Ala) + glycine + H(+). The catalysed reaction is a D-aminoacyl-tRNA + H2O = a tRNA + a D-alpha-amino acid + H(+). Its function is as follows. An aminoacyl-tRNA editing enzyme that deacylates mischarged D-aminoacyl-tRNAs. Also deacylates mischarged glycyl-tRNA(Ala), protecting cells against glycine mischarging by AlaRS. Acts via tRNA-based rather than protein-based catalysis; rejects L-amino acids rather than detecting D-amino acids in the active site. By recycling D-aminoacyl-tRNA to D-amino acids and free tRNA molecules, this enzyme counteracts the toxicity associated with the formation of D-aminoacyl-tRNA entities in vivo and helps enforce protein L-homochirality. The protein is D-aminoacyl-tRNA deacylase of Bifidobacterium adolescentis (strain ATCC 15703 / DSM 20083 / NCTC 11814 / E194a).